Reading from the N-terminus, the 749-residue chain is ATP-dependent zinc metalloprotease FtsH 3 (749 aa).

Residues 1–17 (MTGDPPERRSNGDRLPA) are compositionally biased toward basic and acidic residues. The disordered stretch occupies residues 1 to 67 (MTGDPPERRS…GRNGGGMRPF (67 aa)). Residues 1-75 (MTGDPPERRS…PFRFPGGRWG (75 aa)) lie on the Cytoplasmic side of the membrane. A helical membrane pass occupies residues 76-96 (ILVFILVLLGLNWWISSNALA). Residues 97-186 (PSERVRVPYS…NASPADNGPS (90 aa)) are Extracellular-facing. The helical transmembrane segment at 187-207 (LLVSILLGFGPVILIIALFVF) threads the bilayer. The Cytoplasmic portion of the chain corresponds to 208–749 (LSRRMAGAAG…LGGSVRAGDA (542 aa)). 281–288 (GQPGTGKT) is a binding site for ATP. Histidine 504 provides a ligand contact to Zn(2+). Glutamate 505 is a catalytic residue. Residues histidine 508 and aspartate 580 each coordinate Zn(2+). Basic and acidic residues predominate over residues 679 to 689 (GLEHMRPERVE). Residues 679–749 (GLEHMRPERV…LGGSVRAGDA (71 aa)) are disordered.

In the central section; belongs to the AAA ATPase family. This sequence in the C-terminal section; belongs to the peptidase M41 family. In terms of assembly, homohexamer. The cofactor is Zn(2+).

The protein resides in the cell membrane. Functionally, acts as a processive, ATP-dependent zinc metallopeptidase for both cytoplasmic and membrane proteins. Plays a role in the quality control of integral membrane proteins. The polypeptide is ATP-dependent zinc metalloprotease FtsH 3 (Conexibacter woesei (strain DSM 14684 / CCUG 47730 / CIP 108061 / JCM 11494 / NBRC 100937 / ID131577)).